The chain runs to 203 residues: Large ribosomal subunit protein bL25 (203 aa).

The protein belongs to the bacterial ribosomal protein bL25 family. CTC subfamily. Part of the 50S ribosomal subunit; part of the 5S rRNA/L5/L18/L25 subcomplex. Contacts the 5S rRNA. Binds to the 5S rRNA independently of L5 and L18.

Functionally, this is one of the proteins that binds to the 5S RNA in the ribosome where it forms part of the central protuberance. In Rickettsia prowazekii (strain Madrid E), this protein is Large ribosomal subunit protein bL25.